The primary structure comprises 224 residues: Histone H1.03 (224 aa).

Composition is skewed to low complexity over residues 1–22 (MAETAPVAAPDVAAAPTPAKAA) and 30–42 (AAGGAKARKPAGP). Disordered stretches follow at residues 1–43 (MAET…AGPS) and 99–224 (QTKG…PKKK). The H15 domain maps to 40–113 (AGPSVTELIT…GASGSFRLSK (74 aa)). 4 stretches are compositionally biased toward basic residues: residues 122-137 (APKKKTPAAKPKKPAA), 145-162 (KKPKKAVAVKKSPKKAKK), 170-188 (KAAKSPKKVTKAAKPKKAV), and 197-224 (KAVKPKAAKPKATKPKAAKAKKAAPKKK).

Belongs to the histone H1/H5 family.

It localises to the nucleus. The protein resides in the chromosome. In terms of biological role, histones H1 are necessary for the condensation of nucleosome chains into higher-order structures. This is Histone H1.03 from Gallus gallus (Chicken).